The sequence spans 329 residues: Ribosome biogenesis regulatory protein homolog (329 aa).

Disordered regions lie at residues 227–248 and 262–329; these read KANIKTGKKRKFESNEAPVSAE and KKAK…NKRK. Basic and acidic residues predominate over residues 278 to 295; the sequence is LREKKEKQEKKGAKEATR. Over residues 320-329 the composition is skewed to basic residues; that stretch reads AKKKGANKRK.

This sequence belongs to the RRS1 family.

It localises to the nucleus. The protein resides in the nucleolus. Involved in ribosomal large subunit assembly. This is Ribosome biogenesis regulatory protein homolog from Caenorhabditis briggsae.